A 710-amino-acid chain; its full sequence is Choline transporter-like protein 4 (710 aa).

Residues 1–34 (MGGKQRDEDDEAYGKPVKYDPSFRGPIKNRSCTD) lie on the Cytoplasmic side of the membrane. Residues 35–55 (VICCVLFLLFILGYIVVGIVA) form a helical membrane-spanning segment. Residues 56–229 (WLYGDPRQVL…KIFEDFAQSW (174 aa)) are Extracellular-facing. Asn69, Asn155, and Asn197 each carry an N-linked (GlcNAc...) asparagine glycan. Residues 230 to 250 (YWILVALGVALVLSLLFILLL) traverse the membrane as a helical segment. Over 251 to 252 (RL) the chain is Cytoplasmic. A helical membrane pass occupies residues 253–273 (VAGPLVLVLILGVLGVLAYGI). Residues 274 to 309 (YYCWEEYRVLRDKGASISQLGFTTNLSAYQSVQETW) lie on the Extracellular side of the membrane. Asn298 carries an N-linked (GlcNAc...) asparagine glycan. A helical membrane pass occupies residues 310–330 (LAALIVLAVLEAILLLMLIFL). The Cytoplasmic portion of the chain corresponds to 331 to 358 (RQRIRIAIALLKEASKAVGQMMSTMFYP). A helical membrane pass occupies residues 359 to 379 (LVTFVLLLICIAYWAMTALYL). The Extracellular segment spans residues 380–455 (ATSGQPQYVL…GVLGLFWTLN (76 aa)). Residues Asn393, Asn405, and Asn416 are each glycosylated (N-linked (GlcNAc...) asparagine). A helical membrane pass occupies residues 456–476 (WVLALGQCVLAGAFASFYWAF). Topologically, residues 477–501 (HKPQDIPTFPLISAFIRTLRYHTGS) are cytoplasmic. A helical membrane pass occupies residues 502–522 (LAFGALILTLVQIARVILEYI). The Extracellular portion of the chain corresponds to 523–560 (DHKLRGVQNPVARCIMCCFKCCLWCLEKFIKFLNRNAY). The helical transmembrane segment at 561–581 (IMIAIYGKNFCVSAKNAFMLL) threads the bilayer. The Cytoplasmic portion of the chain corresponds to 582 to 597 (MRNIVRVVVLDKVTDL). A helical membrane pass occupies residues 598 to 618 (LLFFGKLLVVGGVGVLSFFFF). Residues 619-638 (SGRIPGLGKDFKSPHLNYYW) are Extracellular-facing. A helical membrane pass occupies residues 639-659 (LPIMTSILGAYVIASGFFSVF). At 660 to 710 (GMCVDTLFLCFLEDLERNNGSLDRPYYMSKSLLKILGKKNEAPPDNKKRKK) the chain is on the cytoplasmic side.

Belongs to the CTL (choline transporter-like) family. In terms of processing, N-glycosylated; N-glycosylation of Asn-69, Asn-155 and Asn-393 is required for a proper thiamine pyrophosphate uptake. As to expression, highly expressed in colon, also detected in prostate, trachea and lung. Isoform 3 is also expressed in colon but a lower levels. In terms of tissue distribution, expressed in colon at low levels.

The protein resides in the membrane. It localises to the apical cell membrane. It catalyses the reaction choline(out) + n H(+)(in) = choline(in) + n H(+)(out). The catalysed reaction is thiamine diphosphate(out) = thiamine diphosphate(in). Its function is as follows. Choline transporter that plays a role in the choline-acetylcholine system and is required to the efferent innervation of hair cells in the olivocochlear bundle for the maintenance of physiological function of outer hair cells and the protection of hair cells from acoustic injury. Also described as a thiamine pyrophosphate transporter in colon, may mediate the absorption of microbiota-generated thiamine pyrophosphate and contribute to host thiamine (vitamin B1) homeostasis. Also has thiamine pyrophosphate transporter activity. In Homo sapiens (Human), this protein is Choline transporter-like protein 4.